The primary structure comprises 615 residues: Medium-chain acyl-CoA ligase ACSF2, mitochondrial (615 aa).

The N-terminal 41 residues, 1 to 41, are a transit peptide targeting the mitochondrion; sequence MAVYHGMLRFGRLCIASLGARGPRTLLSRPRPNSKLQSVRA. Lysine 179 carries the post-translational modification N6-acetyllysine. An N6-acetyllysine; alternate modification is found at lysine 182. Lysine 182 carries the N6-succinyllysine; alternate modification. Lysine 199 carries the N6-acetyllysine modification. Position 263–271 (263–271) interacts with ATP; it reads TSGTTGNPK. 2 positions are modified to N6-acetyllysine: lysine 340 and lysine 398. Position 478 is an N6-succinyllysine (lysine 478). ATP contacts are provided by aspartate 493 and arginine 508. Residue lysine 510 is modified to N6-acetyllysine. Residues lysine 544 and lysine 570 each carry the N6-acetyllysine; alternate modification. Residues lysine 544 and lysine 570 each carry the N6-succinyllysine; alternate modification. An ATP-binding site is contributed by lysine 599. Lysine 599 bears the N6-succinyllysine mark.

It belongs to the ATP-dependent AMP-binding enzyme family.

The protein localises to the mitochondrion. The catalysed reaction is a medium-chain fatty acid + ATP + CoA = a medium-chain fatty acyl-CoA + AMP + diphosphate. It carries out the reaction octanoate + ATP + CoA = octanoyl-CoA + AMP + diphosphate. Its function is as follows. Acyl-CoA synthases catalyze the initial reaction in fatty acid metabolism, by forming a thioester with CoA. Has some preference toward medium-chain substrates. Plays a role in adipocyte differentiation. This chain is Medium-chain acyl-CoA ligase ACSF2, mitochondrial, found in Mus musculus (Mouse).